Consider the following 471-residue polypeptide: MTIEATALAYKVADISLAEWGRKEIDIAEKEMPGLMAIRKKYAGQKPLKGARVAGSLHMTIQTAVLIETLVDLGADVRWASCNIFSTQDHAAAAIAATGVPVFAWKGETLEDYWWCTRQILDFGDGQGPNLIVDDGGDATLMIILGYKIENNPSMLQNAGGNAEERALFGQLKAIYEEDSNRWHKVAKEMKGVSEETTTGVHRLYQMMEKGELLFPAINVNDSVTKSKFDNLYGCRESLADGIKRATDVMIAGKVAVVLGYGDVGKGCAHSMRSYGARVIVTEIDPICALQAAMEGFEVTTMDKAVKEGNIFVTTTGNKDVVTLEHMKQMPDEAIVCNIGHFDNEIQVEPLNEYKGATKLNIKPQVDKYTFEDGHCIYLLAEGRLVNLGCATGHPSFVMSNSFTNQTLAQIELWKNDYKVDVYRLPKALDEEVARLHLEQIGVKLTTLSKEQAEYIGVPVTGPYKPEHYRY.

Positions 60, 135, and 196 each coordinate substrate. 197–199 (TTT) contacts NAD(+). Positions 226 and 230 each coordinate substrate. Residues Asn231, 260 to 265 (GYGDVG), Glu283, Asn318, 339 to 341 (IGH), and Asn387 contribute to the NAD(+) site.

Belongs to the adenosylhomocysteinase family. Requires NAD(+) as cofactor.

It is found in the cytoplasm. It carries out the reaction S-adenosyl-L-homocysteine + H2O = L-homocysteine + adenosine. The protein operates within amino-acid biosynthesis; L-homocysteine biosynthesis; L-homocysteine from S-adenosyl-L-homocysteine: step 1/1. May play a key role in the regulation of the intracellular concentration of adenosylhomocysteine. This chain is Adenosylhomocysteinase, found in Chlorobium luteolum (strain DSM 273 / BCRC 81028 / 2530) (Pelodictyon luteolum).